The following is a 908-amino-acid chain: Protein translocase subunit SecA (908 aa).

Residues glutamine 87, 105 to 109 (GEGKT), and aspartate 494 each bind ATP. Residues 871–908 (QEFSGGNLNRSQSNGSSVTVTTSSGGGTERKTSRRRKR) are disordered. The segment covering 874–884 (SGGNLNRSQSN) has biased composition (polar residues).

This sequence belongs to the SecA family. As to quaternary structure, monomer and homodimer. Part of the essential Sec protein translocation apparatus which comprises SecA, SecYEG and auxiliary proteins SecDF. Other proteins may also be involved.

It localises to the cell inner membrane. The protein resides in the cytoplasm. It carries out the reaction ATP + H2O + cellular proteinSide 1 = ADP + phosphate + cellular proteinSide 2.. In terms of biological role, part of the Sec protein translocase complex. Interacts with the SecYEG preprotein conducting channel. Has a central role in coupling the hydrolysis of ATP to the transfer of proteins into and across the cell membrane, serving as an ATP-driven molecular motor driving the stepwise translocation of polypeptide chains across the membrane. In Leptospira interrogans serogroup Icterohaemorrhagiae serovar Lai (strain 56601), this protein is Protein translocase subunit SecA.